The primary structure comprises 279 residues: Thymidylate synthase (279 aa).

133–134 (RR) is a dUMP binding site. The active-site Nucleophile is the Cys-154. DUMP is bound by residues 178–181 (RSND), Asn-189, and 219–221 (HIY). Asp-181 lines the (6R)-5,10-methylene-5,6,7,8-tetrahydrofolate pocket. Ala-278 provides a ligand contact to (6R)-5,10-methylene-5,6,7,8-tetrahydrofolate.

Belongs to the thymidylate synthase family. Bacterial-type ThyA subfamily. In terms of assembly, homodimer.

Its subcellular location is the cytoplasm. It carries out the reaction dUMP + (6R)-5,10-methylene-5,6,7,8-tetrahydrofolate = 7,8-dihydrofolate + dTMP. It participates in pyrimidine metabolism; dTTP biosynthesis. Functionally, catalyzes the reductive methylation of 2'-deoxyuridine-5'-monophosphate (dUMP) to 2'-deoxythymidine-5'-monophosphate (dTMP) while utilizing 5,10-methylenetetrahydrofolate (mTHF) as the methyl donor and reductant in the reaction, yielding dihydrofolate (DHF) as a by-product. This enzymatic reaction provides an intracellular de novo source of dTMP, an essential precursor for DNA biosynthesis. The protein is Thymidylate synthase of Streptococcus pneumoniae (strain ATCC 700669 / Spain 23F-1).